A 334-amino-acid polypeptide reads, in one-letter code: S-adenosylmethionine:tRNA ribosyltransferase-isomerase (334 aa).

This sequence belongs to the QueA family. As to quaternary structure, monomer.

It is found in the cytoplasm. The enzyme catalyses 7-aminomethyl-7-carbaguanosine(34) in tRNA + S-adenosyl-L-methionine = epoxyqueuosine(34) in tRNA + adenine + L-methionine + 2 H(+). The protein operates within tRNA modification; tRNA-queuosine biosynthesis. Transfers and isomerizes the ribose moiety from AdoMet to the 7-aminomethyl group of 7-deazaguanine (preQ1-tRNA) to give epoxyqueuosine (oQ-tRNA). The chain is S-adenosylmethionine:tRNA ribosyltransferase-isomerase from Rubrobacter xylanophilus (strain DSM 9941 / JCM 11954 / NBRC 16129 / PRD-1).